The following is a 157-amino-acid chain: MKTTLIVVGRTVEQHYITAINDYIERTKHFISFDMEVIPELKNTKSLTPEQQKEKEGELIAKALQPGDVVVLLDEHGKEMRSVEFARWMEKKLVNVNKRLVFIIGGPYGFSQKVYDAAHEKISMSKMTFSHQMIRLIFVEQIYRAMTILNGGPYHHE.

S-adenosyl-L-methionine-binding positions include leucine 73, glycine 105, and 124-129; that span reads MSKMTF.

The protein belongs to the RNA methyltransferase RlmH family. In terms of assembly, homodimer.

The protein resides in the cytoplasm. The catalysed reaction is pseudouridine(1915) in 23S rRNA + S-adenosyl-L-methionine = N(3)-methylpseudouridine(1915) in 23S rRNA + S-adenosyl-L-homocysteine + H(+). Functionally, specifically methylates the pseudouridine at position 1915 (m3Psi1915) in 23S rRNA. In Bacteroides fragilis (strain ATCC 25285 / DSM 2151 / CCUG 4856 / JCM 11019 / LMG 10263 / NCTC 9343 / Onslow / VPI 2553 / EN-2), this protein is Ribosomal RNA large subunit methyltransferase H.